Reading from the N-terminus, the 180-residue chain is Large ribosomal subunit protein uL5 (180 aa).

It belongs to the universal ribosomal protein uL5 family. As to quaternary structure, part of the 50S ribosomal subunit; part of the 5S rRNA/L5/L18/L25 subcomplex. Contacts the 5S rRNA and the P site tRNA. Forms a bridge to the 30S subunit in the 70S ribosome.

Functionally, this is one of the proteins that bind and probably mediate the attachment of the 5S RNA into the large ribosomal subunit, where it forms part of the central protuberance. In the 70S ribosome it contacts protein S13 of the 30S subunit (bridge B1b), connecting the 2 subunits; this bridge is implicated in subunit movement. Contacts the P site tRNA; the 5S rRNA and some of its associated proteins might help stabilize positioning of ribosome-bound tRNAs. In Polynucleobacter necessarius subsp. necessarius (strain STIR1), this protein is Large ribosomal subunit protein uL5.